The chain runs to 277 residues: Probable diphthine methyl ester synthase (277 aa).

Residues leucine 9, aspartate 89, glycine 92, 117 to 118 (SV), leucine 168, leucine 227, and histidine 252 each bind S-adenosyl-L-methionine.

The protein belongs to the diphthine synthase family.

It carries out the reaction 2-[(3S)-amino-3-carboxypropyl]-L-histidyl-[translation elongation factor 2] + 4 S-adenosyl-L-methionine = diphthine methyl ester-[translation elongation factor 2] + 4 S-adenosyl-L-homocysteine + 3 H(+). It participates in protein modification; peptidyl-diphthamide biosynthesis. S-adenosyl-L-methionine-dependent methyltransferase that catalyzes four methylations of the modified target histidine residue in translation elongation factor 2 (EF-2), to form an intermediate called diphthine methyl ester. The four successive methylation reactions represent the second step of diphthamide biosynthesis. The protein is Probable diphthine methyl ester synthase of Arabidopsis thaliana (Mouse-ear cress).